Consider the following 606-residue polypeptide: Aspartate--tRNA(Asp/Asn) ligase (606 aa).

Glutamate 196 lines the L-aspartate pocket. An aspartate region spans residues 220-223 (QIFK). Residue arginine 242 coordinates L-aspartate. ATP-binding positions include 242 to 244 (RDE) and glutamine 251. Histidine 465 contacts L-aspartate. Glutamate 499 is an ATP binding site. Arginine 506 is a binding site for L-aspartate. Residue 551 to 554 (GMDR) coordinates ATP.

Belongs to the class-II aminoacyl-tRNA synthetase family. Type 1 subfamily. In terms of assembly, homodimer.

The protein localises to the cytoplasm. The enzyme catalyses tRNA(Asx) + L-aspartate + ATP = L-aspartyl-tRNA(Asx) + AMP + diphosphate. Functionally, aspartyl-tRNA synthetase with relaxed tRNA specificity since it is able to aspartylate not only its cognate tRNA(Asp) but also tRNA(Asn). Reaction proceeds in two steps: L-aspartate is first activated by ATP to form Asp-AMP and then transferred to the acceptor end of tRNA(Asp/Asn). In Oleidesulfovibrio alaskensis (strain ATCC BAA-1058 / DSM 17464 / G20) (Desulfovibrio alaskensis), this protein is Aspartate--tRNA(Asp/Asn) ligase.